The following is a 230-amino-acid chain: MKLIVGIGGMTNGGKTTLTNSLLRALPNCCVIHQDDFFKPQDQIAVGEDGFKQWDVLESLDMEAMLDTVQAWLSSPQKFARAHGVSVQPEASDTHILLLEGFLLYSYKPLVDLYSRRYFLTVPYEECKWRRSTRNYTVPDPPGLFDGHVWPMYQKYRQEMEANGVEVVYLDGMKSREELFREVLEDIQNSLLNRSQESAPSPARPARTQGPGRGCGHRTARPAASQQDSM.

9–17 contacts ATP; that stretch reads GMTNGGKTT. Residues Thr-16 and Asp-35 each coordinate Mg(2+). Asp-35 acts as the Proton acceptor in catalysis. Substrate contacts are provided by residues 35–38 and 54–55; these read DDFF and WD. ATP is bound at residue Arg-130. Substrate is bound by residues Arg-131 and 136 to 137; that span reads YT. ATP contacts are provided by residues 134-136 and 174-176; these read RNY and KSR. The segment at 191–230 is disordered; the sequence is LLNRSQESAPSPARPARTQGPGRGCGHRTARPAASQQDSM.

This sequence belongs to the uridine kinase family. NRK subfamily. As to quaternary structure, monomer. Interacts with ITGB1 alone or when associated with alpha-7, but not with alpha-5. As to expression, predominantly expressed in skeletal muscle and, at a much lower level, in the heart (at protein level). No expression in brain, kidney, liver, lung, pancreas nor placenta.

It carries out the reaction beta-nicotinamide D-riboside + ATP = beta-nicotinamide D-ribonucleotide + ADP + H(+). It catalyses the reaction beta-D-ribosylnicotinate + ATP = nicotinate beta-D-ribonucleotide + ADP + H(+). The protein operates within cofactor biosynthesis; NAD(+) biosynthesis. Catalyzes the phosphorylation of nicotinamide riboside (NR) and nicotinic acid riboside (NaR) to form nicotinamide mononucleotide (NMN) and nicotinic acid mononucleotide (NaMN). Reduces laminin matrix deposition and cell adhesion to laminin, but not to fibronectin. Involved in the regulation of PXN at the protein level and of PXN tyrosine phosphorylation. May play a role in the regulation of terminal myogenesis. In Homo sapiens (Human), this protein is Nicotinamide riboside kinase 2 (NMRK2).